The sequence spans 245 residues: Orotidine 5'-phosphate decarboxylase (245 aa).

Residues D22, K44, D71–T80, T131, R192, Q201, G221, and R222 each bind substrate. K73 functions as the Proton donor in the catalytic mechanism.

Belongs to the OMP decarboxylase family. Type 1 subfamily. In terms of assembly, homodimer.

It catalyses the reaction orotidine 5'-phosphate + H(+) = UMP + CO2. The protein operates within pyrimidine metabolism; UMP biosynthesis via de novo pathway; UMP from orotate: step 2/2. Its function is as follows. Catalyzes the decarboxylation of orotidine 5'-monophosphate (OMP) to uridine 5'-monophosphate (UMP). The chain is Orotidine 5'-phosphate decarboxylase from Escherichia coli O157:H7.